Reading from the N-terminus, the 312-residue chain is MTKSVTVKDLKERLNLELICSETGLERPILTSDLSRPGLELTGFFSYYPEDRVQLFGMTEISFSEGMEPEERLKRYKQMCTKRTPAFVISRNLEVPKELVAAAKEADIPVLRSRLKTTRLSVYITNYLESRLAPVISMHGVLVDIYGLGVLITGSSGVGKSETALELVKRGHRLVADDNVEIRQEDELTLIGSSPAIIEHLLEIRGLGIINVMTLFGAGAVRSSKKITIVVHLENWDPDKHYDRVGLDQEKTKIFDMDIPKITVPVRPGRNLSVIIEVAAMNFRLKNMGYNAAEQFTQDLNNLIGHNSSMND.

Residues H139 and K160 contribute to the active site. 154-161 (GSSGVGKS) lines the ATP pocket. Mg(2+) is bound at residue S161. Residue D178 is the Proton acceptor; for phosphorylation activity. Proton donor; for dephosphorylation activity of the active site. Residues 202–211 (LEIRGLGIIN) form an important for the catalytic mechanism of both phosphorylation and dephosphorylation region. Position 203 (E203) interacts with Mg(2+). The active site involves R244. Positions 265 to 270 (PVRPGR) are important for the catalytic mechanism of dephosphorylation.

Belongs to the HPrK/P family. As to quaternary structure, homohexamer. The cofactor is Mg(2+).

It catalyses the reaction [HPr protein]-L-serine + ATP = [HPr protein]-O-phospho-L-serine + ADP + H(+). The enzyme catalyses [HPr protein]-O-phospho-L-serine + phosphate + H(+) = [HPr protein]-L-serine + diphosphate. Its function is as follows. Catalyzes the ATP- as well as the pyrophosphate-dependent phosphorylation of a specific serine residue in HPr, a phosphocarrier protein of the phosphoenolpyruvate-dependent sugar phosphotransferase system (PTS). HprK/P also catalyzes the pyrophosphate-producing, inorganic phosphate-dependent dephosphorylation (phosphorolysis) of seryl-phosphorylated HPr (P-Ser-HPr). The two antagonistic activities of HprK/P are regulated by several intracellular metabolites, which change their concentration in response to the absence or presence of rapidly metabolisable carbon sources (glucose, fructose, etc.) in the growth medium. Therefore, by controlling the phosphorylation state of HPr, HPrK/P is a sensor enzyme that plays a major role in the regulation of carbon metabolism and sugar transport: it mediates carbon catabolite repression (CCR), and regulates PTS-catalyzed carbohydrate uptake and inducer exclusion. This is HPr kinase/phosphorylase from Listeria welshimeri serovar 6b (strain ATCC 35897 / DSM 20650 / CCUG 15529 / CIP 8149 / NCTC 11857 / SLCC 5334 / V8).